Here is a 420-residue protein sequence, read N- to C-terminus: L-cysteine:1D-myo-inositol 2-amino-2-deoxy-alpha-D-glucopyranoside ligase (420 aa).

Cys-46 provides a ligand contact to Zn(2+). L-cysteinyl-5'-AMP contacts are provided by residues 46–49 (CGIT), Thr-61, and 84–86 (NVT). The 'HIGH' region signature appears at 48–58 (ITPYDSTHLGH). Positions 194–199 (ERGGDP) match the 'ERGGDP' region motif. Trp-235 is a binding site for L-cysteinyl-5'-AMP. Cys-239 serves as a coordination point for Zn(2+). 257-259 (GTD) provides a ligand contact to L-cysteinyl-5'-AMP. His-264 contributes to the Zn(2+) binding site. L-cysteinyl-5'-AMP is bound at residue Val-291. The short motif at 297–301 (KMSKS) is the 'KMSKS' region element.

This sequence belongs to the class-I aminoacyl-tRNA synthetase family. MshC subfamily. As to quaternary structure, monomer. The cofactor is Zn(2+).

The enzyme catalyses 1D-myo-inositol 2-amino-2-deoxy-alpha-D-glucopyranoside + L-cysteine + ATP = 1D-myo-inositol 2-(L-cysteinylamino)-2-deoxy-alpha-D-glucopyranoside + AMP + diphosphate + H(+). Catalyzes the ATP-dependent condensation of GlcN-Ins and L-cysteine to form L-Cys-GlcN-Ins. The polypeptide is L-cysteine:1D-myo-inositol 2-amino-2-deoxy-alpha-D-glucopyranoside ligase (Beutenbergia cavernae (strain ATCC BAA-8 / DSM 12333 / CCUG 43141 / JCM 11478 / NBRC 16432 / NCIMB 13614 / HKI 0122)).